Reading from the N-terminus, the 216-residue chain is Adenylate kinase (216 aa).

An ATP-binding site is contributed by 10–15; it reads GAGKGT. The tract at residues 30–59 is NMP; sequence STGDMLRAAVNAGTEVGKRAKAVMDAGKLV. Residues Thr-31, Arg-36, 57–59, 85–88, and Gln-92 contribute to the AMP site; these read KLV and GFPR. Residues 126–163 form an LID region; sequence GRYTCAQCGTVYHDTDKVPVEEGVCDKCGSTHFKRRPD. Residue Arg-127 coordinates ATP. Residues Cys-130 and Cys-133 each contribute to the Zn(2+) site. ATP is bound at residue 136-137; that stretch reads VY. Cys-150 and Cys-153 together coordinate Zn(2+). AMP-binding residues include Arg-160 and Arg-172. Ala-200 provides a ligand contact to ATP.

The protein belongs to the adenylate kinase family. Monomer.

It is found in the cytoplasm. It catalyses the reaction AMP + ATP = 2 ADP. It participates in purine metabolism; AMP biosynthesis via salvage pathway; AMP from ADP: step 1/1. In terms of biological role, catalyzes the reversible transfer of the terminal phosphate group between ATP and AMP. Plays an important role in cellular energy homeostasis and in adenine nucleotide metabolism. This is Adenylate kinase from Rhizobium etli (strain ATCC 51251 / DSM 11541 / JCM 21823 / NBRC 15573 / CFN 42).